Reading from the N-terminus, the 428-residue chain is Enolase (428 aa).

Gln-163 contacts (2R)-2-phosphoglycerate. Residue Glu-205 is the Proton donor of the active site. The Mg(2+) site is built by Asp-242, Glu-283, and Asp-310. Positions 335, 364, 365, and 386 each coordinate (2R)-2-phosphoglycerate. Lys-335 acts as the Proton acceptor in catalysis.

This sequence belongs to the enolase family. Mg(2+) is required as a cofactor.

It is found in the cytoplasm. The protein localises to the secreted. The protein resides in the cell surface. The enzyme catalyses (2R)-2-phosphoglycerate = phosphoenolpyruvate + H2O. Its pathway is carbohydrate degradation; glycolysis; pyruvate from D-glyceraldehyde 3-phosphate: step 4/5. Catalyzes the reversible conversion of 2-phosphoglycerate (2-PG) into phosphoenolpyruvate (PEP). It is essential for the degradation of carbohydrates via glycolysis. The protein is Enolase of Saccharopolyspora erythraea (strain ATCC 11635 / DSM 40517 / JCM 4748 / NBRC 13426 / NCIMB 8594 / NRRL 2338).